The following is a 379-amino-acid chain: DNA (cytosine-5)-methyltransferase (379 aa).

The SAM-dependent MTase C5-type domain occupies 4–366 (LRVLEFYSGI…KVLVSPNEEE (363 aa)). Residue Cys78 is part of the active site. The segment covering 178–192 (KKEQDKHNEKVDENK) has biased composition (basic and acidic residues). The disordered stretch occupies residues 178–205 (KKEQDKHNEKVDENKLNNNSNNNNEQNK). The span at 193–203 (LNNNSNNNNEQ) shows a compositional bias: low complexity.

This sequence belongs to the class I-like SAM-binding methyltransferase superfamily. C5-methyltransferase family.

The protein resides in the nucleus. The catalysed reaction is a 2'-deoxycytidine in DNA + S-adenosyl-L-methionine = a 5-methyl-2'-deoxycytidine in DNA + S-adenosyl-L-homocysteine + H(+). Involved in epigenetic gene silencing. Methylates specific cytosine residues in the retrotransposons DIRS-1 and Skipper. This chain is DNA (cytosine-5)-methyltransferase (dnmA), found in Dictyostelium discoideum (Social amoeba).